We begin with the raw amino-acid sequence, 114 residues long: U-myrmeciitoxin(01)-Mg8a (114 aa).

Positions 1–20 (MKLSTLLVAFVLLVITVILS) are cleaved as a signal peptide. A propeptide spanning residues 21–44 (TPSTNAKALAESNALAVAVSEAEP) is cleaved from the precursor.

Belongs to the formicidae venom precursor-01 superfamily. As to expression, expressed by the venom gland.

Its subcellular location is the secreted. Its function is as follows. May have antimicrobial properties, like most ant linear peptides. The chain is U-myrmeciitoxin(01)-Mg8a from Myrmecia gulosa (Red bulldog ant).